The following is a 61-amino-acid chain: uncharacterized protein (61 aa).

This is an uncharacterized protein from Acidianus convivator (ABV).